The chain runs to 316 residues: Putative S-adenosyl-L-methionine-dependent methyltransferase MAB_4606c (316 aa).

S-adenosyl-L-methionine contacts are provided by residues Asp137 and 166-167 (DL).

This sequence belongs to the UPF0677 family.

Functionally, exhibits S-adenosyl-L-methionine-dependent methyltransferase activity. This is Putative S-adenosyl-L-methionine-dependent methyltransferase MAB_4606c from Mycobacteroides abscessus (strain ATCC 19977 / DSM 44196 / CCUG 20993 / CIP 104536 / JCM 13569 / NCTC 13031 / TMC 1543 / L948) (Mycobacterium abscessus).